Reading from the N-terminus, the 103-residue chain is Large ribosomal subunit protein bL21 (103 aa).

The protein belongs to the bacterial ribosomal protein bL21 family. Part of the 50S ribosomal subunit. Contacts protein L20.

Its function is as follows. This protein binds to 23S rRNA in the presence of protein L20. This Haemophilus influenzae (strain 86-028NP) protein is Large ribosomal subunit protein bL21.